The following is a 953-amino-acid chain: 26S proteasome non-ATPase regulatory subunit 1 (953 aa).

Met-1 is subject to N-acetylmethionine; partial. Position 273 is a phosphothreonine (Thr-273). The interval 279-318 (PGSTNTGTVPGSEKDSDSMETEEKTGSAFVGKTPEASPEP) is disordered. Ser-290 is subject to Phosphoserine. The segment covering 290 to 303 (SEKDSDSMETEEKT) has biased composition (basic and acidic residues). Lys-310 carries the post-translational modification N6-acetyllysine. Position 311 is a phosphothreonine (Thr-311). At Ser-315 the chain carries Phosphoserine. 10 PC repeats span residues 403-436 (TATASLGVIHKGHEKEALQLMATYLPKDTSPGSA), 441-474 (GGLYALGLIHANHGGDIIDYLLNQLKNASNDIVR), 476-510 (GGSLGLGLAAMGTARQDVYDLLKTNLYQDDAVTGE), 511-545 (AAGLALGLVMLGSKNAQAIEDMVGYAQETQHEKIL), 547-580 (GLAVGIALVMYGRMEEADALIESLCRDKDPILRR), 581-616 (SGMYTVAMAYCGSGNNKAIRRLLHVAVSDVNDDVRR), 617-649 (AAVESLGFILFRTPEQCPSVVSLLSESYNPHVR), 651-685 (GAAMALGICCAGTGNKEAINLLEPMTNDPVNYVRQ), 686-726 (GALI…DVMA), and 729-761 (GAILAQGILDAGGHNVTISLQSRTGHTHMPSVV). N6-acetyllysine is present on Lys-720. Phosphothreonine is present on Thr-830. Ser-834 bears the Phosphoserine mark. Disordered regions lie at residues 839–881 (AKKK…LDNP) and 930–953 (AHGPKIEEEEQEPEPPEPFEYIDD). Basic and acidic residues-rich tracts occupy residues 842 to 852 (KEKEKEKKEEE) and 859 to 872 (AEKKEEKEKKKEPE). Residues 936–953 (EEEEQEPEPPEPFEYIDD) show a composition bias toward acidic residues.

Belongs to the proteasome subunit S1 family. Component of the 19S proteasome regulatory particle complex. The 26S proteasome consists of a 20S core particle (CP) and two 19S regulatory subunits (RP). The regulatory particle is made of a lid composed of 9 subunits, a base containing 6 ATPases and few additional components including PSMD1. Interacts with ADRM1. Interacts with ZFAND1.

Component of the 26S proteasome, a multiprotein complex involved in the ATP-dependent degradation of ubiquitinated proteins. This complex plays a key role in the maintenance of protein homeostasis by removing misfolded or damaged proteins, which could impair cellular functions, and by removing proteins whose functions are no longer required. Therefore, the proteasome participates in numerous cellular processes, including cell cycle progression, apoptosis, or DNA damage repair. In Pongo abelii (Sumatran orangutan), this protein is 26S proteasome non-ATPase regulatory subunit 1 (PSMD1).